Consider the following 232-residue polypeptide: MQKYALHAYPVMALMVATLTGCAWIPAKPLVQGATTAQPIPGPVPVANGSIFQSAQPINYGYQPLFEDRRPRNIGDTLTIVLQENVSASKSSSANASRDGKTSFGFDTVPRYLQGLFGNSRADMEASGGNSFNGKGGANASNTFSGTLTVTVDQVLANGNLHVVGEKQIAINQGTEFIRFSGVVNPRTISGSNSVPSTQVADARIEYVGNGYINEAQNMGWLQRFFLNLSPM.

The first 21 residues, Met-1 to Gly-21, serve as a signal peptide directing secretion. Cys-22 is lipidated: N-palmitoyl cysteine. A lipid anchor (S-diacylglycerol cysteine) is attached at Cys-22.

It belongs to the FlgH family. The basal body constitutes a major portion of the flagellar organelle and consists of four rings (L,P,S, and M) mounted on a central rod.

Its subcellular location is the cell outer membrane. The protein resides in the bacterial flagellum basal body. Its function is as follows. Assembles around the rod to form the L-ring and probably protects the motor/basal body from shearing forces during rotation. This chain is Flagellar L-ring protein, found in Salmonella choleraesuis (strain SC-B67).